The chain runs to 313 residues: Homoserine O-succinyltransferase (313 aa).

The Acyl-thioester intermediate role is filled by cysteine 142. Residues lysine 163 and serine 192 each coordinate substrate. Histidine 235 serves as the catalytic Proton acceptor. The active site involves glutamate 237. Residue arginine 249 participates in substrate binding.

This sequence belongs to the MetA family.

It is found in the cytoplasm. It carries out the reaction L-homoserine + succinyl-CoA = O-succinyl-L-homoserine + CoA. The protein operates within amino-acid biosynthesis; L-methionine biosynthesis via de novo pathway; O-succinyl-L-homoserine from L-homoserine: step 1/1. In terms of biological role, transfers a succinyl group from succinyl-CoA to L-homoserine, forming succinyl-L-homoserine. The polypeptide is Homoserine O-succinyltransferase (Shewanella sp. (strain MR-4)).